The primary structure comprises 479 residues: Integrator complex subunit 12 (479 aa).

The interval 57–140 (SKVSLPKMTK…SPIAFQTKDI (84 aa)) is disordered. Over residues 70–90 (KSSSSSSASSSITTTSSSKSS) the composition is skewed to low complexity. The span at 91–128 (TSEKSKKESEKRTLEKIRVDPGEGVEPPKKPRLEKQDS) shows a compositional bias: basic and acidic residues. The PHD-type zinc finger occupies 161–217 (GLACVVCRQMTVTSGNQLVECQECHNLYHQECHKPQVTDKDVNDPRLVWYCARCTRQ). 3 disordered regions span residues 221–241 (MAQK…TTVP), 274–293 (TAAS…LPPG), and 305–479 (SNVG…KLKK). 2 stretches are compositionally biased toward low complexity: residues 223-239 (QKTQ…LATT) and 280-289 (SSSSSSSSSS). Over residues 305–328 (SNVGPSSTKLSTSQSGNSKTSPAA) the composition is skewed to polar residues. Gly residues predominate over residues 354-364 (SSAGSGNGNNG). The segment covering 399-411 (GSLSPGAAPSSSL) has biased composition (low complexity). Over residues 412-428 (GGNGGSGGNGAGNGGNS) the composition is skewed to gly residues. Positions 429–451 (AGSSSSSGNNNNNGAKASADGKA) are enriched in low complexity. Basic residues predominate over residues 466-479 (QMVKKKAAQKKLKK).

Belongs to the Integrator subunit 12 family. As to quaternary structure, component of the Integrator complex, composed of core subunits INTS1, INTS2, INTS3, INTS4, INTS5, INTS6, INTS7, INTS8, INTS9/RC74, INTS10, INTS11/CPSF3L, INTS12, INTS13, INTS14 and INTS15. The core complex associates with protein phosphatase 2A subunits PPP2CA and PPP2R1A, to form the Integrator-PP2A (INTAC) complex.

The protein localises to the nucleus. Component of the integrator complex, a multiprotein complex that terminates RNA polymerase II (Pol II) transcription in the promoter-proximal region of genes. The integrator complex provides a quality checkpoint during transcription elongation by driving premature transcription termination of transcripts that are unfavorably configured for transcriptional elongation: the complex terminates transcription by (1) catalyzing dephosphorylation of the C-terminal domain (CTD) of Pol II subunit POLR2A/RPB1 and SUPT5H/SPT5, (2) degrading the exiting nascent RNA transcript via endonuclease activity and (3) promoting the release of Pol II from bound DNA. The integrator complex is also involved in terminating the synthesis of non-coding Pol II transcripts, such as enhancer RNAs (eRNAs), small nuclear RNAs (snRNAs), telomerase RNAs and long non-coding RNAs (lncRNAs). The polypeptide is Integrator complex subunit 12 (ints12) (Danio rerio (Zebrafish)).